The sequence spans 197 residues: Nascent polypeptide-associated complex subunit alpha (197 aa).

Positions 1–18 (MTGSTETRHNEKDVKEPQ) are enriched in basic and acidic residues. The disordered stretch occupies residues 1 to 30 (MTGSTETRHNEKDVKEPQVDSDADSDNEAI). Positions 19–28 (VDSDADSDNE) are enriched in acidic residues. In terms of domain architecture, NAC-A/B spans 58–123 (SRSEKKARKL…AKIEDLTQHA (66 aa)). The tract at residues 134 to 155 (TREAPQLKTVEEDDNEDVEEDS) is disordered. Acidic residues predominate over residues 144-155 (EEDDNEDVEEDS). In terms of domain architecture, UBA spans 158-195 (IEEKDIELVISQANTTRNKAIRALKDADNDIVNAIMSL).

Belongs to the NAC-alpha family.

May promote appropriate targeting of ribosome-nascent polypeptide complexes. In Caenorhabditis briggsae, this protein is Nascent polypeptide-associated complex subunit alpha.